The primary structure comprises 231 residues: MSIVSLSELLEAGAHFGHQARRWNPRMFPYIYTERNGIHIIDLVQTAQLLTEACQFIRDASQEGKKFLFLGTKRQAAGVIAEQAIRSNSYYVNQRWLGGMLTNWMTIKSRVERLQRLEMDEQAGLIDMLPKKEAAINRRELDKLRKNLNGIKNMSRLPDFIVVVDQKRETTAIQECIKLGIPIICILDTNCNPEIIDIPIPANDDAIRSIKLIISRIADSIIEGSTYALNK.

This sequence belongs to the universal ribosomal protein uS2 family.

Its subcellular location is the plastid. The protein localises to the chloroplast. The chain is Small ribosomal subunit protein uS2c (rps2) from Gracilaria tenuistipitata var. liui (Red alga).